The sequence spans 470 residues: Putative multidrug resistance protein MdtD (470 aa).

The Periplasmic segment spans residues 1–11; it reads MTEFPDNTRWQ. The chain crosses the membrane as a helical span at residues 12-32; it reads LWIVAFGFFMQSLDTTIVNTA. The Cytoplasmic segment spans residues 33 to 48; it reads LPSMAKSLGESPLHMH. A helical membrane pass occupies residues 49–69; that stretch reads MVVVSYVLTVAVMLPASGWLA. The Periplasmic portion of the chain corresponds to 70–76; it reads DKIGVRN. Residues 77–97 traverse the membrane as a helical segment; that stretch reads IFFAAIVLFTLGSLFCALSGT. Residues 98–101 lie on the Cytoplasmic side of the membrane; the sequence is LNQL. A helical transmembrane segment spans residues 102 to 124; that stretch reads VLARVLQGVGGAMMVPVGRLTVM. Topologically, residues 125–137 are periplasmic; that stretch reads KIVPRAQYMAAMT. A helical membrane pass occupies residues 138–158; it reads FVALPGQIGPLLGPALGGVLV. At 159–164 the chain is on the cytoplasmic side; the sequence is EYASWH. Residues 165–185 form a helical membrane-spanning segment; sequence WIFLINIPVGIVGAMATFMLM. At 186–196 the chain is on the periplasmic side; it reads PNYTIETRRFD. The chain crosses the membrane as a helical span at residues 197–217; the sequence is LPGFLLLAIGMAVLTLALDGS. Residues 218–224 are Cytoplasmic-facing; sequence KSMGISP. The helical transmembrane segment at 225–245 threads the bilayer; it reads WTLAGLAAGGAAAILLYLFHA. The Periplasmic portion of the chain corresponds to 246 to 262; that stretch reads KKNSGALFSLRLFRTPT. A helical transmembrane segment spans residues 263–283; it reads FSLGLLGSFAGRIGSGMLPFM. Residues 284-285 lie on the Cytoplasmic side of the membrane; that stretch reads TP. A helical membrane pass occupies residues 286-306; the sequence is VFLQIGLGFSPFHAGLMMIPM. Residues 307-341 are Periplasmic-facing; sequence VLGSMGMKRIVVQIVNRFGYRRVLVATTLGLALVS. Residues 342–362 form a helical membrane-spanning segment; that stretch reads LLFMSVALLGWYYLLPLVLLL. Residues 363 to 395 lie on the Cytoplasmic side of the membrane; the sequence is QGMVNSARFSSMNTLTLKDLPDTLASSGNSLLS. A helical transmembrane segment spans residues 396–416; the sequence is MIMQLSMSIGVTIAGMLLGMF. Over 417–430 the chain is Periplasmic; it reads GQQHIGIDSSATHH. The chain crosses the membrane as a helical span at residues 431–451; sequence VFMYTWLCMAVIIALPAIIFA. The Cytoplasmic segment spans residues 452–470; sequence RVPNDTQQNMVISRRKRSL.

The protein belongs to the major facilitator superfamily. TCR/Tet family.

Its subcellular location is the cell inner membrane. In Salmonella typhi, this protein is Putative multidrug resistance protein MdtD.